The following is a 442-amino-acid chain: GTPase Der (442 aa).

2 consecutive EngA-type G domains span residues 2-167 and 175-351; these read RTIA…PIQN and FKFC…EQAM. Residues 8–15, 55–59, 119–122, 181–188, 228–232, and 293–296 contribute to the GTP site; these read GKPNVGKS, DTGGI, NKVE, GRPNVGKS, DTAGV, and NKWD. The region spanning 352–436 is the KH-like domain; it reads RKVATSLLND…PITLYWQDKN (85 aa).

This sequence belongs to the TRAFAC class TrmE-Era-EngA-EngB-Septin-like GTPase superfamily. EngA (Der) GTPase family. As to quaternary structure, associates with the 50S ribosomal subunit.

GTPase that plays an essential role in the late steps of ribosome biogenesis. This chain is GTPase Der, found in Ureaplasma urealyticum serovar 10 (strain ATCC 33699 / Western).